Consider the following 100-residue polypeptide: NADH-quinone oxidoreductase subunit K (100 aa).

Transmembrane regions (helical) follow at residues 4-24 (LSHG…SLVM), 28-48 (ILFM…ALVV), and 60-80 (IMYI…LALL).

This sequence belongs to the complex I subunit 4L family. As to quaternary structure, NDH-1 is composed of 13 different subunits. Subunits NuoA, H, J, K, L, M, N constitute the membrane sector of the complex.

It is found in the cell membrane. The enzyme catalyses a quinone + NADH + 5 H(+)(in) = a quinol + NAD(+) + 4 H(+)(out). Its function is as follows. NDH-1 shuttles electrons from NADH, via FMN and iron-sulfur (Fe-S) centers, to quinones in the respiratory chain. The immediate electron acceptor for the enzyme in this species is believed to be ubiquinone. Couples the redox reaction to proton translocation (for every two electrons transferred, four hydrogen ions are translocated across the cytoplasmic membrane), and thus conserves the redox energy in a proton gradient. This is NADH-quinone oxidoreductase subunit K from Buchnera aphidicola subsp. Baizongia pistaciae (strain Bp).